The chain runs to 191 residues: Probable GTP-binding protein EngB (191 aa).

Residues 19–188 (NIPEICFMGR…HKKIFELFVE (170 aa)) form the EngB-type G domain. GTP contacts are provided by residues 27 to 34 (GRSNVGKS), 53 to 57 (GRTQL), 70 to 73 (DLPG), 136 to 139 (NKFD), and 167 to 169 (AST). The Mg(2+) site is built by serine 34 and threonine 55.

The protein belongs to the TRAFAC class TrmE-Era-EngA-EngB-Septin-like GTPase superfamily. EngB GTPase family. It depends on Mg(2+) as a cofactor.

Necessary for normal cell division and for the maintenance of normal septation. The protein is Probable GTP-binding protein EngB of Mycoplasma genitalium (strain ATCC 33530 / DSM 19775 / NCTC 10195 / G37) (Mycoplasmoides genitalium).